Here is a 311-residue protein sequence, read N- to C-terminus: Dihydroorotate dehydrogenase A (fumarate) (311 aa).

Residues S19 and 43 to 44 (KS) each bind FMN. Residues K43, 67 to 71 (NSMGL), and N127 contribute to the substrate site. N127 lines the FMN pocket. The active-site Nucleophile is the C130. Positions 164 and 192 each coordinate FMN. 193 to 194 (NS) contacts substrate. Residues G221, 249–250 (GG), and 271–272 (GT) contribute to the FMN site.

This sequence belongs to the dihydroorotate dehydrogenase family. Type 1 subfamily. In terms of assembly, homodimer. FMN is required as a cofactor.

It is found in the cytoplasm. The catalysed reaction is (S)-dihydroorotate + fumarate = orotate + succinate. It functions in the pathway pyrimidine metabolism; UMP biosynthesis via de novo pathway. Its function is as follows. Catalyzes the conversion of dihydroorotate to orotate with fumarate as the electron acceptor. The polypeptide is Dihydroorotate dehydrogenase A (fumarate) (pyrDA) (Lactococcus lactis subsp. cremoris (Streptococcus cremoris)).